Consider the following 526-residue polypeptide: Peptide chain release factor 3 (526 aa).

The tr-type G domain maps to 11-277 (SKRRTFAIIS…SLIKWAPSPL (267 aa)). GTP contacts are provided by residues 20 to 27 (SHPDAGKT), 88 to 92 (DTPGH), and 142 to 145 (NKLD).

Belongs to the TRAFAC class translation factor GTPase superfamily. Classic translation factor GTPase family. PrfC subfamily.

It localises to the cytoplasm. Its function is as follows. Increases the formation of ribosomal termination complexes and stimulates activities of RF-1 and RF-2. It binds guanine nucleotides and has strong preference for UGA stop codons. It may interact directly with the ribosome. The stimulation of RF-1 and RF-2 is significantly reduced by GTP and GDP, but not by GMP. This chain is Peptide chain release factor 3, found in Buchnera aphidicola subsp. Acyrthosiphon pisum (strain Tuc7).